The following is a 469-amino-acid chain: Putative dipeptidase SAUSA300_1697 (469 aa).

Residue His84 coordinates Zn(2+). Residue Asp86 is part of the active site. Zn(2+) is bound at residue Asp115. Residue Glu149 is the Proton acceptor of the active site. 3 residues coordinate Zn(2+): Glu150, Asp173, and His440.

It belongs to the peptidase M20A family. The cofactor is Zn(2+).

The chain is Putative dipeptidase SAUSA300_1697 from Staphylococcus aureus (strain USA300).